The chain runs to 88 residues: Small ribosomal subunit protein uS15c (88 aa).

The protein belongs to the universal ribosomal protein uS15 family. In terms of assembly, part of the 30S ribosomal subunit.

It localises to the plastid. The protein resides in the chloroplast. This Arabidopsis thaliana (Mouse-ear cress) protein is Small ribosomal subunit protein uS15c (rps15).